The chain runs to 430 residues: Mucorpepsin (430 aa).

The signal sequence occupies residues 1-22; it reads MLFSQITSAILLTAASLSLTTA. A propeptide spans 23–69 (activation peptide); that stretch reads RPVSKQSESKDKLLALPLTSVSRKFSQTKFGQQQLAEKLAGLKPFSE. The 333-residue stretch at 89–421 folds into the Peptidase A1 domain; it reads YAIPVSIGTP…DFGNNRIGFA (333 aa). Asp107 is an active-site residue. Cys120 and Cys126 form a disulfide bridge. N-linked (GlcNAc...) asparagine glycans are attached at residues Asn148 and Asn257. Residue Asp306 is part of the active site. An intrachain disulfide couples Cys341 to Cys385.

It belongs to the peptidase A1 family.

It carries out the reaction Hydrolysis of proteins, favoring hydrophobic residues at P1 and P1'. Clots milk. Does not accept Lys at P1, and hence does not activate trypsinogen.. Its function is as follows. This enzyme, capable of clotting milk is frequently used for cheese production. The protein is Mucorpepsin of Rhizomucor miehei.